The sequence spans 115 residues: Nucleoid-associated protein tlr0723 (115 aa).

This sequence belongs to the YbaB/EbfC family. In terms of assembly, homodimer.

It is found in the cytoplasm. The protein localises to the nucleoid. Functionally, binds to DNA and alters its conformation. May be involved in regulation of gene expression, nucleoid organization and DNA protection. The chain is Nucleoid-associated protein tlr0723 from Thermosynechococcus vestitus (strain NIES-2133 / IAM M-273 / BP-1).